A 501-amino-acid polypeptide reads, in one-letter code: NAD(P)H-quinone oxidoreductase chain 4, chloroplastic (501 aa).

Transmembrane regions (helical) follow at residues 5 to 25 (FPWL…IFFL), 38 to 58 (ICIC…HFQL), 85 to 105 (GLSI…TLAA), 112 to 130 (SRLF…IGSF), 135 to 155 (LLLF…LLAM), 168 to 188 (FILY…GIGL), 209 to 229 (ALEI…LPII), 243 to 263 (HYST…YGLV), 275 to 295 (SIFS…AALT), 306 to 326 (IAYS…SITD), 331 to 351 (GAIL…FLAG), 387 to 407 (LALP…GIIT), 417 to 437 (ILIT…LLSM), and 463 to 483 (LFVS…PDFV).

The protein belongs to the complex I subunit 4 family.

The protein resides in the plastid. The protein localises to the chloroplast thylakoid membrane. It carries out the reaction a plastoquinone + NADH + (n+1) H(+)(in) = a plastoquinol + NAD(+) + n H(+)(out). It catalyses the reaction a plastoquinone + NADPH + (n+1) H(+)(in) = a plastoquinol + NADP(+) + n H(+)(out). The polypeptide is NAD(P)H-quinone oxidoreductase chain 4, chloroplastic (Eucalyptus globulus subsp. globulus (Tasmanian blue gum)).